The sequence spans 548 residues: Glutamyl-tRNA(Gln) amidotransferase subunit B, chloroplastic/mitochondrial (548 aa).

Belongs to the GatB/GatE family. GatB subfamily. Subunit of the heterotrimeric GatCAB amidotransferase (AdT) complex, composed of A, B and C subunits.

Its subcellular location is the mitochondrion. It localises to the plastid. The protein localises to the chloroplast. It catalyses the reaction L-glutamyl-tRNA(Gln) + L-glutamine + ATP + H2O = L-glutaminyl-tRNA(Gln) + L-glutamate + ADP + phosphate + H(+). Allows the formation of correctly charged Gln-tRNA(Gln) through the transamidation of misacylated Glu-tRNA(Gln) in chloroplasts and mitochondria. The reaction takes place in the presence of glutamine and ATP through an activated gamma-phospho-Glu-tRNA(Gln). The chain is Glutamyl-tRNA(Gln) amidotransferase subunit B, chloroplastic/mitochondrial from Sorghum bicolor (Sorghum).